The sequence spans 536 residues: Subtilisin-like proteinase Spm1 (536 aa).

Residues 1-15 (MKSVILLSLAACAVA) form the signal peptide. Positions 16-147 (APTAGVETIH…RYEEVKKDEC (132 aa)) are excised as a propeptide. Positions 44-137 (YIIKFKKHVD…IERDTIVHTM (94 aa)) constitute an Inhibitor I9 domain. The Peptidase S8 domain maps to 156-462 (PWGLSRVSHR…GGCSNYFEIV (307 aa)). Catalysis depends on charge relay system residues Asp192 and His224. 2 N-linked (GlcNAc...) asparagine glycosylation sites follow: Asn254 and Asn294. Ser390 serves as the catalytic Charge relay system.

It belongs to the peptidase S8 family.

The protein resides in the vacuole. This is Subtilisin-like proteinase Spm1 (SPM1) from Pyricularia oryzae (strain 70-15 / ATCC MYA-4617 / FGSC 8958) (Rice blast fungus).